Reading from the N-terminus, the 1561-residue chain is Sterile alpha motif domain-containing protein 9-like (1561 aa).

The SAM domain maps to 14 to 79; the sequence is WTKEHVRKWV…RMYNKLISSP (66 aa). Residues 78–157 form a disordered region; sequence SPESHNQDSR…DNKPKPEQMS (80 aa). Basic and acidic residues-rich tracts occupy residues 82 to 107 and 142 to 153; these read HNQD…KNEE and VTKDMEDNKPKP.

As to quaternary structure, interacts with EEA1.

Its subcellular location is the early endosome. The protein resides in the mitochondrion. May be involved in endosome fusion. Mediates down-regulation of growth factor signaling via internalization of growth factor receptors. The protein is Sterile alpha motif domain-containing protein 9-like (Samd9l) of Mus musculus (Mouse).